A 327-amino-acid chain; its full sequence is GTP 3',8-cyclase (327 aa).

The Radical SAM core domain occupies Ala-4 to Arg-226. Arg-13 is a binding site for GTP. Cys-20 and Cys-24 together coordinate [4Fe-4S] cluster. Tyr-26 is a binding site for S-adenosyl-L-methionine. Residue Cys-27 participates in [4Fe-4S] cluster binding. Residue Arg-63 participates in GTP binding. Residue Gly-67 participates in S-adenosyl-L-methionine binding. Thr-94 contacts GTP. Position 118 (Ser-118) interacts with S-adenosyl-L-methionine. Residue Lys-155 participates in GTP binding. Position 189 (Met-189) interacts with S-adenosyl-L-methionine. 2 residues coordinate [4Fe-4S] cluster: Cys-254 and Cys-257. GTP is bound at residue Arg-259–Arg-261. Residue Cys-271 participates in [4Fe-4S] cluster binding.

It belongs to the radical SAM superfamily. MoaA family. In terms of assembly, monomer and homodimer. Requires [4Fe-4S] cluster as cofactor.

It catalyses the reaction GTP + AH2 + S-adenosyl-L-methionine = (8S)-3',8-cyclo-7,8-dihydroguanosine 5'-triphosphate + 5'-deoxyadenosine + L-methionine + A + H(+). It functions in the pathway cofactor biosynthesis; molybdopterin biosynthesis. Its function is as follows. Catalyzes the cyclization of GTP to (8S)-3',8-cyclo-7,8-dihydroguanosine 5'-triphosphate. This chain is GTP 3',8-cyclase, found in Heliobacterium modesticaldum (strain ATCC 51547 / Ice1).